We begin with the raw amino-acid sequence, 213 residues long: Probable nicotinate-nucleotide adenylyltransferase (213 aa).

The protein belongs to the NadD family.

It carries out the reaction nicotinate beta-D-ribonucleotide + ATP + H(+) = deamido-NAD(+) + diphosphate. It participates in cofactor biosynthesis; NAD(+) biosynthesis; deamido-NAD(+) from nicotinate D-ribonucleotide: step 1/1. Its function is as follows. Catalyzes the reversible adenylation of nicotinate mononucleotide (NaMN) to nicotinic acid adenine dinucleotide (NaAD). This Shigella boydii serotype 4 (strain Sb227) protein is Probable nicotinate-nucleotide adenylyltransferase.